Here is a 29-residue protein sequence, read N- to C-terminus: Conotoxin SIVC (29 aa).

Ala-1 carries the N-acetylalanine; partial modification. Pro-2 bears the 4-hydroxyproline mark. O-linked (HexNAc...) threonine glycosylation is found at Thr-7 and Thr-9. 2 positions are modified to 4-hydroxyproline: Pro-18 and Pro-22. At Cys-29 the chain carries Cysteine amide.

This sequence belongs to the conotoxin A superfamily. Post-translationally, O-linked glycans consist of Hex4-HexNAc2 hexasaccharides. N-terminus is found to be free and N-acetylated, depending on the fraction studied. In terms of processing, contains 3 disulfide bonds. In terms of tissue distribution, expressed by the venom duct. Low expression in the distal venom duct sections.

The protein resides in the secreted. Probable neurotoxin with ion channel inhibitor activity. The sequence is that of Conotoxin SIVC from Conus striatus (Striated cone).